The following is a 360-amino-acid chain: UDP-N-acetylglucosamine--N-acetylmuramyl-(pentapeptide) pyrophosphoryl-undecaprenol N-acetylglucosamine transferase (360 aa).

UDP-N-acetyl-alpha-D-glucosamine is bound by residues S198 and Q289.

Belongs to the glycosyltransferase 28 family. MurG subfamily.

It localises to the cell membrane. It catalyses the reaction Mur2Ac(oyl-L-Ala-gamma-D-Glu-L-Lys-D-Ala-D-Ala)-di-trans,octa-cis-undecaprenyl diphosphate + UDP-N-acetyl-alpha-D-glucosamine = beta-D-GlcNAc-(1-&gt;4)-Mur2Ac(oyl-L-Ala-gamma-D-Glu-L-Lys-D-Ala-D-Ala)-di-trans,octa-cis-undecaprenyl diphosphate + UDP + H(+). It participates in cell wall biogenesis; peptidoglycan biosynthesis. Functionally, cell wall formation. Catalyzes the transfer of a GlcNAc subunit on undecaprenyl-pyrophosphoryl-MurNAc-pentapeptide (lipid intermediate I) to form undecaprenyl-pyrophosphoryl-MurNAc-(pentapeptide)GlcNAc (lipid intermediate II). This chain is UDP-N-acetylglucosamine--N-acetylmuramyl-(pentapeptide) pyrophosphoryl-undecaprenol N-acetylglucosamine transferase, found in Streptococcus pyogenes serotype M4 (strain MGAS10750).